A 338-amino-acid polypeptide reads, in one-letter code: L-serine dehydratase (338 aa).

The residue at position 39 (Lys39) is an N6-(pyridoxal phosphate)lysine.

This sequence belongs to the serine/threonine dehydratase family. It depends on pyridoxal 5'-phosphate as a cofactor.

Its subcellular location is the cytoplasm. It carries out the reaction L-serine = pyruvate + NH4(+). The protein operates within carbohydrate biosynthesis; gluconeogenesis. The chain is L-serine dehydratase (SDL1) from Saccharomyces cerevisiae (strain AWRI1631) (Baker's yeast).